The following is an 86-amino-acid chain: Large ribosomal subunit protein bL27 (86 aa).

A compositionally biased stretch (gly residues) spans 1–10 (MAQKKGGGST). Residues 1-20 (MAQKKGGGSTRNGRDSESKR) form a disordered region.

Belongs to the bacterial ribosomal protein bL27 family.

This is Large ribosomal subunit protein bL27 from Bordetella parapertussis (strain 12822 / ATCC BAA-587 / NCTC 13253).